The primary structure comprises 97 residues: Probable gamma-secretase subunit PEN-2 (97 aa).

The Cytoplasmic portion of the chain corresponds to 1–20 (MLIPEDDKLDDEKMINIAKK). The segment at residues 21-39 (LWFIGFFFLPWVWLINILY) is an intramembrane region (helical). Over 40-55 (FIPYRNSLNDKVKWYL) the chain is Cytoplasmic. A helical transmembrane segment spans residues 56–76 (KFSLIGFLGYSTIFMGWMGIY). The Lumenal portion of the chain corresponds to 77–97 (LVNRNKWGAFGDDISITIPFG).

This sequence belongs to the PEN-2 family. In terms of assembly, the functional gamma-secretase complex is composed of at least four polypeptides: a presenilin homodimer, nicastrin, aph1 and psenen.

It is found in the endoplasmic reticulum membrane. The protein resides in the golgi apparatus. It localises to the golgi stack membrane. The protein localises to the cell membrane. Its subcellular location is the membrane. Essential subunit of the gamma-secretase complex, an endoprotease complex that catalyzes the intramembrane cleavage of integral membrane proteins such as Notch receptors. The gamma-secretase complex plays a role in Notch and Wnt signaling cascades and regulation of downstream processes via its role in processing key regulatory proteins. The chain is Probable gamma-secretase subunit PEN-2 (psenen) from Dictyostelium discoideum (Social amoeba).